The sequence spans 325 residues: MLVISANEQRKLVNMNEVIAYAALALQEFSAERTITPIRTSLPFANEQNTALIMPSVAEGLEALGLKVVTVVPENKKIGKKTINGIVMLSDFQTGEPLALLEGSYLTMIRTGALSGVATKHLARHNAKTLCIIGTGEQAKGIAEAVFAVRDIEKVMLYNRTEEKAYAFAQYIQEKFGKPAYVYANANEAISEADIIVTTTNASTPVFSEKLQKGVHINAVGSFRPNMQELPSHAIANANKVVVESKEAALEETGDLQVPVREGLFEASDIHAELGQIISGEKAGRESDEEITVFKSVGLAVVDIIVAKYLYEKAVERGVGERIEF.

It belongs to the ornithine cyclodeaminase/mu-crystallin family.

The enzyme catalyses L-proline + NAD(+) = 1-pyrroline-2-carboxylate + NADH + H(+). The catalysed reaction is L-proline + NADP(+) = 1-pyrroline-2-carboxylate + NADPH + H(+). Catalyzes the reduction of Delta(1)-pyrroline-2-carboxylate (Pyr2C) to L-proline, using preferentially NADPH over NADH as the electron donor. May be involved in a degradation pathway that converts trans-3-hydroxy-L-proline (t3LHyp) to L-proline. This chain is Delta(1)-pyrroline-2-carboxylate reductase, found in Bacillus cereus (strain ZK / E33L).